A 393-amino-acid chain; its full sequence is Probable tRNA sulfurtransferase (393 aa).

The 108-residue stretch at 61–168 (DEVIESLTRV…GDVINIYSIE (108 aa)) folds into the THUMP domain. Residues 186 to 187 (LL), 211 to 212 (YF), Arg268, Gly290, and Gln299 each bind ATP.

Belongs to the ThiI family.

The protein resides in the cytoplasm. The enzyme catalyses [ThiI sulfur-carrier protein]-S-sulfanyl-L-cysteine + a uridine in tRNA + 2 reduced [2Fe-2S]-[ferredoxin] + ATP + H(+) = [ThiI sulfur-carrier protein]-L-cysteine + a 4-thiouridine in tRNA + 2 oxidized [2Fe-2S]-[ferredoxin] + AMP + diphosphate. It catalyses the reaction [ThiS sulfur-carrier protein]-C-terminal Gly-Gly-AMP + S-sulfanyl-L-cysteinyl-[cysteine desulfurase] + AH2 = [ThiS sulfur-carrier protein]-C-terminal-Gly-aminoethanethioate + L-cysteinyl-[cysteine desulfurase] + A + AMP + 2 H(+). Its pathway is cofactor biosynthesis; thiamine diphosphate biosynthesis. Catalyzes the ATP-dependent transfer of a sulfur to tRNA to produce 4-thiouridine in position 8 of tRNAs, which functions as a near-UV photosensor. Also catalyzes the transfer of sulfur to the sulfur carrier protein ThiS, forming ThiS-thiocarboxylate. This is a step in the synthesis of thiazole, in the thiamine biosynthesis pathway. The sulfur is donated as persulfide by IscS. The protein is Probable tRNA sulfurtransferase of Lachnospira eligens (strain ATCC 27750 / DSM 3376 / VPI C15-48 / C15-B4) (Eubacterium eligens).